The following is a 309-amino-acid chain: Uracil phosphoribosyltransferase homolog (309 aa).

A disordered region spans residues 1 to 41; it reads MATELQCPDSMPCHNQQVNSASTPSPEQLRPGDPILDHAGG. The span at 13–26 shows a compositional bias: polar residues; sequence CHNQQVNSASTPSP. Residue Ser25 is modified to Phosphoserine. GTP-binding positions include Arg133, Arg142, and 176 to 179; that span reads EKGN. 5-phospho-alpha-D-ribose 1-diphosphate is bound at residue Arg186. GTP contacts are provided by Arg203 and Arg232. Residue 238–246 coordinates 5-phospho-alpha-D-ribose 1-diphosphate; it reads YPILSTGNT. Uracil is bound at residue 299–301; it reads THF.

This sequence belongs to the UPRTase family.

It localises to the cytoplasm. It is found in the nucleus. In Macaca fascicularis (Crab-eating macaque), this protein is Uracil phosphoribosyltransferase homolog (UPRT).